The primary structure comprises 499 residues: MIKRALISVFDKTGILDLAKFLESRDVEIISTGGTYKHLKENGVKVIDIEEVTGFPEMLDGRVKTLNPLIHGGILAIRDNEEHMKVIEEKGINPIDMVVVNLYPFFNKVEENLSFDEKVEFIDIGGPTMIRAAAKNFKDVVVLTDTKDYENVIDEIKENDQVNIKTRKKLAGKVFNLMSAYDAAISNFLLEEEYPEYLTLSYKKNMDLRYGENPHQTAAYYTSTVGKYPMKNFEKLNGKELSYNNIKDMDIAWKTVCEFEEVACCALKHNTPCGVAIGDTVQEVYTKAYECDPISIFGGIVAFNRKVDKETAENLAKIFLEIVVAPDFDEDALEVLKNKKNLRVIKCEEKSTEGKDMAKVDGGILVQKSDNKLLEDTKVVTEKSPTEQEMKDLIFGMKVVKYVKSNAIVVVKDGMAKGIGGGQVNRIWAAKEALDRAGDGIVLASDAFFPFGDVAEEAAKWGIKAIIQPGGSIRDEESIKVCDEKGISMVFTGIRHFKH.

Positions methionine 1 to threonine 144 constitute an MGS-like domain.

Belongs to the PurH family.

It catalyses the reaction (6R)-10-formyltetrahydrofolate + 5-amino-1-(5-phospho-beta-D-ribosyl)imidazole-4-carboxamide = 5-formamido-1-(5-phospho-D-ribosyl)imidazole-4-carboxamide + (6S)-5,6,7,8-tetrahydrofolate. The enzyme catalyses IMP + H2O = 5-formamido-1-(5-phospho-D-ribosyl)imidazole-4-carboxamide. The protein operates within purine metabolism; IMP biosynthesis via de novo pathway; 5-formamido-1-(5-phospho-D-ribosyl)imidazole-4-carboxamide from 5-amino-1-(5-phospho-D-ribosyl)imidazole-4-carboxamide (10-formyl THF route): step 1/1. It functions in the pathway purine metabolism; IMP biosynthesis via de novo pathway; IMP from 5-formamido-1-(5-phospho-D-ribosyl)imidazole-4-carboxamide: step 1/1. The protein is Bifunctional purine biosynthesis protein PurH of Clostridium botulinum (strain Okra / Type B1).